Consider the following 343-residue polypeptide: MLRRVVLSRLYARLGGPAVSAGRGGRRGVASSVPPSGSTSPRALNIFDRELKRKQKNWAARQPEPMKFDYLKEEIGSRIADRVYDIARDFPLALDIGCGRGYIAQHLNKETVGKIFQTDIAEHALKNSIETDIPTVNILADEEFLPFPENTFDLVVSSLSLHWVNDLPRALEQIHYVLKPDGVFVGAMFGGDTLYELRCSLQLAETEREGGFSPHISPFTAVNDLGHLLGRAGFNTLTVDTDEIQVNYPGMFELMEDLKGMGESNCSWNRKALLHRDTMLAAAAVYREMYSNEDGSIPATYQIYHMIGWKYHDSQARPAERGSATVSFGDLARLNDTMSQGKK.

Residues 1-29 (MLRRVVLSRLYARLGGPAVSAGRGGRRGV) constitute a mitochondrion transit peptide. The segment at 18-40 (AVSAGRGGRRGVASSVPPSGSTS) is disordered.

It belongs to the methyltransferase superfamily. In terms of assembly, interacts with NDUFAF8, leading to stabilize NDUFAF5. Interacts with NDUFS7. Interacts with PYURF (via TRM112 domain); the interaction is direct and stabilizes NDUFAF5 protein.

Its subcellular location is the mitochondrion inner membrane. In terms of biological role, arginine hydroxylase that mediates hydroxylation of 'Arg-111' of NDUFS7 and is involved in the assembly of mitochondrial NADH:ubiquinone oxidoreductase complex (complex I, MT-ND1) at early stages. May also have methyltransferase activity. In Rattus norvegicus (Rat), this protein is Arginine-hydroxylase NDUFAF5, mitochondrial.